A 525-amino-acid polypeptide reads, in one-letter code: GMP synthase [glutamine-hydrolyzing] (525 aa).

Positions 9 to 207 constitute a Glutamine amidotransferase type-1 domain; that stretch reads RILILDFGSQ…VRDICQCEAL (199 aa). Residue cysteine 86 is the Nucleophile of the active site. Catalysis depends on residues histidine 181 and glutamate 183. The GMPS ATP-PPase domain occupies 208 to 400; that stretch reads WTPAKIIDDA…LGLPYDMLYR (193 aa). 235-241 contributes to the ATP binding site; it reads SGGVDSS.

Homodimer.

The enzyme catalyses XMP + L-glutamine + ATP + H2O = GMP + L-glutamate + AMP + diphosphate + 2 H(+). The protein operates within purine metabolism; GMP biosynthesis; GMP from XMP (L-Gln route): step 1/1. Functionally, catalyzes the synthesis of GMP from XMP. The protein is GMP synthase [glutamine-hydrolyzing] of Escherichia coli O8 (strain IAI1).